Consider the following 197-residue polypeptide: UDP-N-acetylglucosamine transferase subunit ALG13 (197 aa).

This sequence belongs to the glycosyltransferase 28 family. In terms of assembly, heterodimer with ALG14 to form a functional enzyme.

It is found in the endoplasmic reticulum. The catalysed reaction is an N-acetyl-alpha-D-glucosaminyl-diphospho-di-trans,poly-cis-dolichol + UDP-N-acetyl-alpha-D-glucosamine = an N,N'-diacetylchitobiosyl-diphospho-di-trans,poly-cis-dolichol + UDP + H(+). In terms of biological role, involved in protein N-glycosylation. Essential for the second step of the dolichol-linked oligosaccharide pathway. In Kluyveromyces lactis (strain ATCC 8585 / CBS 2359 / DSM 70799 / NBRC 1267 / NRRL Y-1140 / WM37) (Yeast), this protein is UDP-N-acetylglucosamine transferase subunit ALG13 (ALG13).